A 109-amino-acid chain; its full sequence is Nucleoid-associated protein YbaB (109 aa).

It belongs to the YbaB/EbfC family. Homodimer.

It localises to the cytoplasm. It is found in the nucleoid. Functionally, binds to DNA and alters its conformation. May be involved in regulation of gene expression, nucleoid organization and DNA protection. This chain is Nucleoid-associated protein YbaB, found in Escherichia coli O8 (strain IAI1).